Here is a 427-residue protein sequence, read N- to C-terminus: Histidinol dehydrogenase (427 aa).

Residues Ser-232, Gln-254, and His-257 each coordinate substrate. Zn(2+) contacts are provided by Gln-254 and His-257. Catalysis depends on proton acceptor residues Glu-322 and His-323. 4 residues coordinate substrate: His-323, Asp-356, Glu-410, and His-415. A Zn(2+)-binding site is contributed by Asp-356. A Zn(2+)-binding site is contributed by His-415.

It belongs to the histidinol dehydrogenase family. Requires Zn(2+) as cofactor.

It carries out the reaction L-histidinol + 2 NAD(+) + H2O = L-histidine + 2 NADH + 3 H(+). It participates in amino-acid biosynthesis; L-histidine biosynthesis; L-histidine from 5-phospho-alpha-D-ribose 1-diphosphate: step 9/9. In terms of biological role, catalyzes the sequential NAD-dependent oxidations of L-histidinol to L-histidinaldehyde and then to L-histidine. The sequence is that of Histidinol dehydrogenase from Listeria monocytogenes serovar 1/2a (strain ATCC BAA-679 / EGD-e).